The primary structure comprises 265 residues: Ubiquinone biosynthesis protein COQ4 homolog, mitochondrial (265 aa).

A mitochondrion-targeting transit peptide spans 1–30; sequence MMQRSWQSWRRGLTLGLASRRSYVASVEAP. Residues histidine 170, aspartate 171, histidine 174, and glutamate 186 each coordinate Zn(2+).

The protein belongs to the COQ4 family. As to quaternary structure, component of a multi-subunit COQ enzyme complex. The cofactor is Zn(2+).

The protein resides in the mitochondrion inner membrane. It carries out the reaction a 4-hydroxy-3-methoxy-5-(all-trans-polyprenyl)benzoate + H(+) = a 2-methoxy-6-(all-trans-polyprenyl)phenol + CO2. It functions in the pathway cofactor biosynthesis; ubiquinone biosynthesis. Its function is as follows. Lyase that catalyzes the C1-decarboxylation of 4-hydroxy-3-methoxy-5-(all-trans-polyprenyl)benzoic acid into 2-methoxy-6-(all-trans-polyprenyl)phenol during ubiquinone biosynthesis. The chain is Ubiquinone biosynthesis protein COQ4 homolog, mitochondrial from Drosophila virilis (Fruit fly).